The sequence spans 192 residues: Adapter protein MecA (192 aa).

It belongs to the MecA family. In terms of assembly, homodimer.

Enables the recognition and targeting of unfolded and aggregated proteins to the ClpC protease or to other proteins involved in proteolysis. Acts negatively in the development of competence by binding ComK and recruiting it to the ClpCP protease. When overexpressed, inhibits sporulation. Also involved in Spx degradation by ClpC. In Oceanobacillus iheyensis (strain DSM 14371 / CIP 107618 / JCM 11309 / KCTC 3954 / HTE831), this protein is Adapter protein MecA.